We begin with the raw amino-acid sequence, 722 residues long: MTEETGNDFQMVQGYEIVPSNEEAHAEEVQGDELVLAEDLAQGDEVQVNGLVSAEMSTPPTSRRRRKKSLVWEHFTIEAVSGGATRACCKLCKQTFAYSSGSKIAGTSHLKRHITLGSCPIIKNQEHKLALTPAVGTDNDGEGTVERPSKRRYRYTGYANAAFDQDRSCSYLAKMIILHDYPLHIVQQPAFTTFIDSLQPRFRVVDVETMEGEVYAVYQKEKENLMQAFSTMPGRISLTIGLWTTSQTLGYVSLAGQFIDSEWKIHRRMLNFMMVSSPHSENALSEAISTSLSDWNMKDKLFTITLDNDCSSHDIYSANLRDYLSNKNNLMLKGQLFVVRCYAHILNAVAQDVIASIHGVIYNIRESIKFIKASPSREEKFAEIALQLEIPSTKTLCLDVTTQWNTTYLMLLAALDYKQAFSTLETSDDNYNEAPSAEDWKKVEAACNYLKLLYDSAHSIMAAANPTSNLFFHEAWKLQLELSNATGHEDPVFSSIAKDMHERFDKYWKDCNLVLAIAVVMDPRFKMKLVEFSYSKIYGVEAAKYVKVVDDAVHELYKEYVAQPLPLTPAYVEQGDGNNAPASENGTQATAPSTGDGLVDFDMYLSEIATSQPTKSELEQYLDESLTPRIQEFDILNWWKLNTLKFPTLSRMARDILAIPMSMVSSGNSIFSAGTGTRMLDDYRSSLRPEIVEALVCAKDWLQYLPATPEAPSTTLVKVDAP.

The BED-type zinc-finger motif lies at 66-134 (RKKSLVWEHF…QEHKLALTPA (69 aa)). 4 residues coordinate Zn(2+): Cys-89, Cys-92, His-113, and His-127. The disordered stretch occupies residues 572-592 (VEQGDGNNAPASENGTQATAP). Positions 576–592 (DGNNAPASENGTQATAP) are enriched in polar residues. Residues 617-702 (ELEQYLDESL…EALVCAKDWL (86 aa)) form an HATC (Hobo-Ac-Tam3) domain region.

In terms of assembly, homodimer.

Its subcellular location is the nucleus. Functionally, transposase-like protein that is essential for plant growth and development. May regulate global gene expression by recruiting other cellular factors. The sequence is that of Zinc finger BED domain-containing protein RICESLEEPER 2 from Oryza sativa subsp. japonica (Rice).